The primary structure comprises 353 residues: Photosystem II D2 protein (353 aa).

Thr-2 is modified (N-acetylthreonine). Phosphothreonine is present on Thr-2. A helical transmembrane segment spans residues 41-61 (CAYFALGGWFTGTTFVTSWYT). His-118 contacts chlorophyll a. Residues 125–141 (GFMLRQFELARSVQLRP) traverse the membrane as a helical segment. Pheophytin a contacts are provided by Gln-130 and Asn-143. Residues 153–166 (VFVSVFLIYPLGQS) traverse the membrane as a helical segment. Chlorophyll a is bound at residue His-198. A helical transmembrane segment spans residues 208 to 228 (AALLCAIHGATVENTLFEDGD). A plastoquinone is bound by residues His-215 and Phe-262. Position 215 (His-215) interacts with Fe cation. Residue His-269 coordinates Fe cation. A helical membrane pass occupies residues 279-295 (GLWMSALGVVGLALNLR).

The protein belongs to the reaction center PufL/M/PsbA/D family. PSII is composed of 1 copy each of membrane proteins PsbA, PsbB, PsbC, PsbD, PsbE, PsbF, PsbH, PsbI, PsbJ, PsbK, PsbL, PsbM, PsbT, PsbX, PsbY, PsbZ, Psb30/Ycf12, at least 3 peripheral proteins of the oxygen-evolving complex and a large number of cofactors. It forms dimeric complexes. Requires The D1/D2 heterodimer binds P680, chlorophylls that are the primary electron donor of PSII, and subsequent electron acceptors. It shares a non-heme iron and each subunit binds pheophytin, quinone, additional chlorophylls, carotenoids and lipids. There is also a Cl(-1) ion associated with D1 and D2, which is required for oxygen evolution. The PSII complex binds additional chlorophylls, carotenoids and specific lipids. as cofactor.

Its subcellular location is the plastid. The protein localises to the chloroplast thylakoid membrane. It catalyses the reaction 2 a plastoquinone + 4 hnu + 2 H2O = 2 a plastoquinol + O2. Functionally, photosystem II (PSII) is a light-driven water:plastoquinone oxidoreductase that uses light energy to abstract electrons from H(2)O, generating O(2) and a proton gradient subsequently used for ATP formation. It consists of a core antenna complex that captures photons, and an electron transfer chain that converts photonic excitation into a charge separation. The D1/D2 (PsbA/PsbD) reaction center heterodimer binds P680, the primary electron donor of PSII as well as several subsequent electron acceptors. D2 is needed for assembly of a stable PSII complex. The sequence is that of Photosystem II D2 protein from Pelargonium hortorum (Common geranium).